We begin with the raw amino-acid sequence, 476 residues long: MWTGLGPAVTLALVLVVAWATELKPTAPPIFTGRPFVVAWDVPTQDCGPRHKMPLDPKDMKAFDVQASPNEGFVNQNITIFYRDRLGMYPHFNSVGRSVHGGVPQNGSLWVHLEMLKGHVEHYIRTQEPAGLAVIDWEDWRPVWVRNWQDKDVYRRLSRQLVASHHPDWPPERIVKEAQYEFEFAARQFMLETLRFVKAFRPRHLWGFYLFPDCYNHDYVQNWETYTGRCPDVEVSRNDQLSWLWAESTALFPSVYLEETLASSTHGRNFVSFRVQEALRVADVHHANHALPVYVFTRPTYSRGLTGLSEMDLISTIGESAALGAAGVILWGDAGFTTSNETCRRLKDYLTRSLVPYVVNVSWAAQYCSWAQCHGHGRCVRRDPNAHTFLHLSASSFRLVPSHAPDEPRLRPEGELSWADRNHLQTHFRCQCYLGWGGEQCQWDRRRAAGGASGAWAGSHLTGLLAVAVLAFTWTS.

An N-terminal signal peptide occupies residues 1–20 (MWTGLGPAVTLALVLVVAWA). Disulfide bonds link Cys-47-Cys-343 and Cys-214-Cys-230. N-linked (GlcNAc...) asparagine glycans are attached at residues Asn-77 and Asn-106. The active-site Proton donor is Glu-138. Residues Asn-340 and Asn-360 are each glycosylated (N-linked (GlcNAc...) asparagine). Positions 364–442 (AAQYCSWAQC…YLGWGGEQCQ (79 aa)) constitute an EGF-like domain. Cystine bridges form between Cys-368–Cys-379, Cys-373–Cys-430, and Cys-432–Cys-441. Gly-451 carries GPI-anchor amidated glycine lipidation. The propeptide at 452–476 (ASGAWAGSHLTGLLAVAVLAFTWTS) is removed in mature form.

Belongs to the glycosyl hydrolase 56 family. As to quaternary structure, interacts with MST1R. In terms of assembly, (Microbial infection) Interacts with Jaagsiekte sheep retrovirus (JSRV) envelope proteins.

It is found in the cell membrane. It catalyses the reaction Random hydrolysis of (1-&gt;4)-linkages between N-acetyl-beta-D-glucosamine and D-glucuronate residues in hyaluronate.. Functionally, catalyzes hyaluronan degradation into small fragments that are endocytosed and degraded in lysosomes by HYAL1 and exoglycosidases. Essential for the breakdown of extracellular matrix hyaluronan. This Ovis aries (Sheep) protein is Hyaluronidase-2 (HYAL2).